An 80-amino-acid chain; its full sequence is DNA-directed RNA polymerase subunit Rpo5 (80 aa).

This sequence belongs to the archaeal Rpo5/eukaryotic RPB5 RNA polymerase subunit family. In terms of assembly, part of the RNA polymerase complex.

Its subcellular location is the cytoplasm. It catalyses the reaction RNA(n) + a ribonucleoside 5'-triphosphate = RNA(n+1) + diphosphate. Functionally, DNA-dependent RNA polymerase (RNAP) catalyzes the transcription of DNA into RNA using the four ribonucleoside triphosphates as substrates. The chain is DNA-directed RNA polymerase subunit Rpo5 from Thermofilum pendens (strain DSM 2475 / Hrk 5).